Consider the following 457-residue polypeptide: Argininosuccinate lyase (457 aa).

The protein belongs to the lyase 1 family. Argininosuccinate lyase subfamily.

It is found in the cytoplasm. It carries out the reaction 2-(N(omega)-L-arginino)succinate = fumarate + L-arginine. The protein operates within amino-acid biosynthesis; L-arginine biosynthesis; L-arginine from L-ornithine and carbamoyl phosphate: step 3/3. This is Argininosuccinate lyase from Shewanella sediminis (strain HAW-EB3).